The chain runs to 147 residues: Cytochrome c-type biogenesis protein CcmE (147 aa).

At 1-9 the chain is on the cytoplasmic side; sequence MKNLKKQRR. Residues 10-30 form a helical; Signal-anchor for type II membrane protein membrane-spanning segment; it reads IQVIALATVALVLSTALIGYA. Residues 31 to 147 lie on the Periplasmic side of the membrane; the sequence is MRDGINFFRA…EQGVYKGTEG (117 aa). 2 residues coordinate heme: histidine 123 and tyrosine 127.

It belongs to the CcmE/CycJ family.

It localises to the cell inner membrane. Functionally, heme chaperone required for the biogenesis of c-type cytochromes. Transiently binds heme delivered by CcmC and transfers the heme to apo-cytochromes in a process facilitated by CcmF and CcmH. The sequence is that of Cytochrome c-type biogenesis protein CcmE from Roseobacter denitrificans (strain ATCC 33942 / OCh 114) (Erythrobacter sp. (strain OCh 114)).